Here is a 444-residue protein sequence, read N- to C-terminus: Argininosuccinate synthase (444 aa).

ATP is bound by residues 17 to 25 and A43; that span reads AFSGGLDTS. Y99 is an L-citrulline binding site. Residues G129 and T131 each coordinate ATP. The L-aspartate site is built by T131, N135, and D136. An L-citrulline-binding site is contributed by N135. D136 serves as a coordination point for ATP. Positions 139 and 192 each coordinate L-citrulline. An ATP-binding site is contributed by D194. Positions 201, 203, and 280 each coordinate L-citrulline.

This sequence belongs to the argininosuccinate synthase family. Type 2 subfamily. Homotetramer.

The protein resides in the cytoplasm. It catalyses the reaction L-citrulline + L-aspartate + ATP = 2-(N(omega)-L-arginino)succinate + AMP + diphosphate + H(+). It participates in amino-acid biosynthesis; L-arginine biosynthesis; L-arginine from L-ornithine and carbamoyl phosphate: step 2/3. This Delftia acidovorans (strain DSM 14801 / SPH-1) protein is Argininosuccinate synthase.